The following is a 214-amino-acid chain: Adenylate kinase (214 aa).

10–15 contributes to the ATP binding site; it reads GAGKGT. The segment at 30–59 is NMP; that stretch reads STGDMFRAAIKAGTELGKQAKALMDEGKLV. AMP is bound by residues threonine 31, arginine 36, 57–59, 85–88, and glutamine 92; these read KLV and GFPR. The LID stretch occupies residues 122–159; sequence GRRVHQTSGRSYHIVYNPPKVEGKDDVTGEDLIIRADD. Residues arginine 123 and 132–133 each bind ATP; that span reads SY. Arginine 156 and arginine 167 together coordinate AMP. ATP is bound at residue glutamine 200.

Belongs to the adenylate kinase family. As to quaternary structure, monomer.

It is found in the cytoplasm. It catalyses the reaction AMP + ATP = 2 ADP. It functions in the pathway purine metabolism; AMP biosynthesis via salvage pathway; AMP from ADP: step 1/1. In terms of biological role, catalyzes the reversible transfer of the terminal phosphate group between ATP and AMP. Plays an important role in cellular energy homeostasis and in adenine nucleotide metabolism. This is Adenylate kinase from Haemophilus influenzae (strain PittEE).